We begin with the raw amino-acid sequence, 346 residues long: Guanine nucleotide-binding protein subunit beta-2 (346 aa).

WD repeat units lie at residues 57-96 (GHIN…KVQV), 99-138 (LRSA…ASGV), 147-185 (GYEG…KTMD), 188-227 (GHAG…HKQM), 230-269 (GHEM…QIAL), 274-313 (QKNT…HNGM), and 316-346 (GHEN…RLWL).

The protein belongs to the WD repeat G protein beta family. As to quaternary structure, g proteins are composed of 3 units, alpha, beta and gamma. Interacts with Ggammae/Guanine nucleotide-binding protein subunit gamma-e.

Its function is as follows. Guanine nucleotide-binding proteins (G proteins) are involved as modulators or transducers in various transmembrane signaling systems. The beta and gamma chains are required for the GTPase activity, for replacement of GDP by GTP, and for G protein-effector interaction. In Calliphora vicina (Blue blowfly), this protein is Guanine nucleotide-binding protein subunit beta-2.